We begin with the raw amino-acid sequence, 328 residues long: MKDLLQQLTSHYRLTKEEAKEAMLAIGNGKINAAQVAAFISVYMMRSITVAELQGFREALLEMCLDADLSEYDPIDIVGTGGDGKDTFNISTLSCFVVAGAGIKVAKHGNYAVSSSCGSSNVVEYLGYKFSNSKDVLRKQIEEANFCMLHAPLFHPALKNVAPVRKELGMRTIYNMLGPLVNPALPTYHLLGTFNMDLARLYGYIHQSLNSKFAIVHALDGYDEISLTGGFKVISNQLDRVLEPDDMGLHTYKAAELSGGKTVEDAAKIFIEVLENKSTRAQKEVVLANAGLAISIAKPDISLFDAIATARESLESGQAYECFKKAVK.

5-phospho-alpha-D-ribose 1-diphosphate contacts are provided by residues G79, 82–83, T87, 89–92, 107–115, and S119; these read GD, NIST, and KHGNYAVSS. G79 provides a ligand contact to anthranilate. S91 is a binding site for Mg(2+). N110 provides a ligand contact to anthranilate. Residue R165 coordinates anthranilate. 2 residues coordinate Mg(2+): D223 and E224.

This sequence belongs to the anthranilate phosphoribosyltransferase family. Homodimer. Mg(2+) is required as a cofactor.

The enzyme catalyses N-(5-phospho-beta-D-ribosyl)anthranilate + diphosphate = 5-phospho-alpha-D-ribose 1-diphosphate + anthranilate. It participates in amino-acid biosynthesis; L-tryptophan biosynthesis; L-tryptophan from chorismate: step 2/5. Its function is as follows. Catalyzes the transfer of the phosphoribosyl group of 5-phosphorylribose-1-pyrophosphate (PRPP) to anthranilate to yield N-(5'-phosphoribosyl)-anthranilate (PRA). This chain is Anthranilate phosphoribosyltransferase, found in Cytophaga hutchinsonii (strain ATCC 33406 / DSM 1761 / CIP 103989 / NBRC 15051 / NCIMB 9469 / D465).